A 32-amino-acid polypeptide reads, in one-letter code: GILSTFKGLAKGVAKDLAGNLLDKFKCKITGC.

Residues Cys27 and Cys32 are joined by a disulfide bond.

Expressed by the skin glands.

It localises to the secreted. Its function is as follows. Antibacterial activity against Gram-positive bacterium S.aureus and Gram-negative bacterium E.coli. Weak hemolytic activity. The sequence is that of Ranatuerin-2BYa from Rana boylii (Foothill yellow-legged frog).